Reading from the N-terminus, the 217-residue chain is Probable transaldolase (217 aa).

Catalysis depends on Lys-83, which acts as the Schiff-base intermediate with substrate.

The protein belongs to the transaldolase family. Type 3B subfamily.

It localises to the cytoplasm. The catalysed reaction is D-sedoheptulose 7-phosphate + D-glyceraldehyde 3-phosphate = D-erythrose 4-phosphate + beta-D-fructose 6-phosphate. Its pathway is carbohydrate degradation; pentose phosphate pathway; D-glyceraldehyde 3-phosphate and beta-D-fructose 6-phosphate from D-ribose 5-phosphate and D-xylulose 5-phosphate (non-oxidative stage): step 2/3. In terms of biological role, transaldolase is important for the balance of metabolites in the pentose-phosphate pathway. The chain is Probable transaldolase from Anaeromyxobacter sp. (strain K).